Here is a 309-residue protein sequence, read N- to C-terminus: Probable lipid kinase YegS-like (309 aa).

The 134-residue stretch at 1-134 (MTTPRWRLIL…IDLLRVDADG (134 aa)) folds into the DAGKc domain. ATP-binding positions include threonine 39, 65 to 71 (GDGTLSA), and threonine 96. The Mg(2+) site is built by leucine 219, aspartate 222, and leucine 224. Glutamate 280 acts as the Proton acceptor in catalysis.

The protein belongs to the diacylglycerol/lipid kinase family. YegS lipid kinase subfamily. Requires Mg(2+) as cofactor. Ca(2+) serves as cofactor.

The protein resides in the cytoplasm. Probably phosphorylates lipids; the in vivo substrate is unknown. The polypeptide is Probable lipid kinase YegS-like (Stenotrophomonas maltophilia (strain K279a)).